The following is a 370-amino-acid chain: Pituitary-specific positive transcription factor 1 (370 aa).

The 9aaTAD signature appears at 5 to 13 (AFASSDNFV). Residues 202-276 (MDSPEIRELE…ILSKWLEEAE (75 aa)) enclose the POU-specific domain. Positions 292 to 351 (KRKRRTTISIAAKEALERHFGEQSKPSSQEIMRMAEGLNLEKEVVRVWFCNRRQREKRVK) form a DNA-binding region, homeobox.

This sequence belongs to the POU transcription factor family. Class-1 subfamily. In terms of tissue distribution, pituitary gland.

It is found in the nucleus. Its function is as follows. Transcription factor that activates growth hormone and prolactin genes. Specifically binds to the consensus sequence 5'-TAAAT-3'. The polypeptide is Pituitary-specific positive transcription factor 1 (POU1F1) (Meleagris gallopavo (Wild turkey)).